We begin with the raw amino-acid sequence, 442 residues long: Histidinol dehydrogenase (442 aa).

3 residues coordinate NAD(+): Y138, Q196, and N219. Positions 245, 267, and 270 each coordinate substrate. Zn(2+) is bound by residues Q267 and H270. Catalysis depends on proton acceptor residues E334 and H335. Residues H335, D368, E422, and H427 each contribute to the substrate site. D368 is a Zn(2+) binding site. Residue H427 coordinates Zn(2+).

It belongs to the histidinol dehydrogenase family. Homodimer. Zn(2+) serves as cofactor.

The enzyme catalyses L-histidinol + 2 NAD(+) + H2O = L-histidine + 2 NADH + 3 H(+). It participates in amino-acid biosynthesis; L-histidine biosynthesis; L-histidine from 5-phospho-alpha-D-ribose 1-diphosphate: step 9/9. In terms of biological role, catalyzes the sequential NAD-dependent oxidations of L-histidinol to L-histidinaldehyde and then to L-histidine. In Pectobacterium atrosepticum (strain SCRI 1043 / ATCC BAA-672) (Erwinia carotovora subsp. atroseptica), this protein is Histidinol dehydrogenase.